Consider the following 294-residue polypeptide: ATP phosphoribosyltransferase (294 aa).

It belongs to the ATP phosphoribosyltransferase family. Long subfamily. Mg(2+) is required as a cofactor.

The protein localises to the cytoplasm. It catalyses the reaction 1-(5-phospho-beta-D-ribosyl)-ATP + diphosphate = 5-phospho-alpha-D-ribose 1-diphosphate + ATP. It participates in amino-acid biosynthesis; L-histidine biosynthesis; L-histidine from 5-phospho-alpha-D-ribose 1-diphosphate: step 1/9. With respect to regulation, feedback inhibited by histidine. Functionally, catalyzes the condensation of ATP and 5-phosphoribose 1-diphosphate to form N'-(5'-phosphoribosyl)-ATP (PR-ATP). Has a crucial role in the pathway because the rate of histidine biosynthesis seems to be controlled primarily by regulation of HisG enzymatic activity. This is ATP phosphoribosyltransferase from Chlorobaculum parvum (strain DSM 263 / NCIMB 8327) (Chlorobium vibrioforme subsp. thiosulfatophilum).